The primary structure comprises 392 residues: S-adenosylmethionine synthase (392 aa).

His17 is an ATP binding site. Residue Asp19 coordinates Mg(2+). Position 45 (Glu45) interacts with K(+). Positions 58 and 102 each coordinate L-methionine. The interval 102 to 112 (QSADIAQGVDA) is flexible loop. Residues 169-171 (DAK), 235-236 (KF), Asp244, 250-251 (RK), Ala267, and Lys271 each bind ATP. Asp244 provides a ligand contact to L-methionine. Lys275 is an L-methionine binding site.

The protein belongs to the AdoMet synthase family. Homotetramer; dimer of dimers. Mg(2+) serves as cofactor. It depends on K(+) as a cofactor.

It localises to the cytoplasm. The catalysed reaction is L-methionine + ATP + H2O = S-adenosyl-L-methionine + phosphate + diphosphate. It functions in the pathway amino-acid biosynthesis; S-adenosyl-L-methionine biosynthesis; S-adenosyl-L-methionine from L-methionine: step 1/1. Its function is as follows. Catalyzes the formation of S-adenosylmethionine (AdoMet) from methionine and ATP. The overall synthetic reaction is composed of two sequential steps, AdoMet formation and the subsequent tripolyphosphate hydrolysis which occurs prior to release of AdoMet from the enzyme. The protein is S-adenosylmethionine synthase of Methylobacterium nodulans (strain LMG 21967 / CNCM I-2342 / ORS 2060).